Consider the following 482-residue polypeptide: tRNA sulfurtransferase (482 aa).

One can recognise a THUMP domain in the interval 61 to 165 (EQAIEALACI…GEELFIVSAI (105 aa)). ATP contacts are provided by residues 183–184 (LI), Lys-265, Gly-287, and Gln-296. Cys-344 and Cys-456 are oxidised to a cystine. The Rhodanese domain maps to 404 to 482 (SGDNEVILDI…GFANVKVYRP (79 aa)). The active-site Cysteine persulfide intermediate is Cys-456.

This sequence belongs to the ThiI family.

The protein localises to the cytoplasm. It carries out the reaction [ThiI sulfur-carrier protein]-S-sulfanyl-L-cysteine + a uridine in tRNA + 2 reduced [2Fe-2S]-[ferredoxin] + ATP + H(+) = [ThiI sulfur-carrier protein]-L-cysteine + a 4-thiouridine in tRNA + 2 oxidized [2Fe-2S]-[ferredoxin] + AMP + diphosphate. The enzyme catalyses [ThiS sulfur-carrier protein]-C-terminal Gly-Gly-AMP + S-sulfanyl-L-cysteinyl-[cysteine desulfurase] + AH2 = [ThiS sulfur-carrier protein]-C-terminal-Gly-aminoethanethioate + L-cysteinyl-[cysteine desulfurase] + A + AMP + 2 H(+). The protein operates within cofactor biosynthesis; thiamine diphosphate biosynthesis. Catalyzes the ATP-dependent transfer of a sulfur to tRNA to produce 4-thiouridine in position 8 of tRNAs, which functions as a near-UV photosensor. Also catalyzes the transfer of sulfur to the sulfur carrier protein ThiS, forming ThiS-thiocarboxylate. This is a step in the synthesis of thiazole, in the thiamine biosynthesis pathway. The sulfur is donated as persulfide by IscS. The chain is tRNA sulfurtransferase from Aeromonas hydrophila subsp. hydrophila (strain ATCC 7966 / DSM 30187 / BCRC 13018 / CCUG 14551 / JCM 1027 / KCTC 2358 / NCIMB 9240 / NCTC 8049).